We begin with the raw amino-acid sequence, 216 residues long: Probable nicotinate-nucleotide adenylyltransferase (216 aa).

It belongs to the NadD family.

The enzyme catalyses nicotinate beta-D-ribonucleotide + ATP + H(+) = deamido-NAD(+) + diphosphate. Its pathway is cofactor biosynthesis; NAD(+) biosynthesis; deamido-NAD(+) from nicotinate D-ribonucleotide: step 1/1. Its function is as follows. Catalyzes the reversible adenylation of nicotinate mononucleotide (NaMN) to nicotinic acid adenine dinucleotide (NaAD). The polypeptide is Probable nicotinate-nucleotide adenylyltransferase (Shewanella baltica (strain OS195)).